The sequence spans 342 residues: Nuclear hormone receptor family member nhr-150 (342 aa).

The nuclear receptor DNA-binding region spans 1-71 (MCQVCGAAEA…AGMTSKKIQS (71 aa)). An NR C4-type zinc finger spans residues 2 to 22 (CQVCGAAEADLHFGGISCRAC). The segment at 39-54 (CTCKTRILDSHPCRSC) adopts an NR C4-type; degenerate zinc-finger fold. The 248-residue stretch at 94-341 (SARIIPRSSL…GFMEIIRESK (248 aa)) folds into the NR LBD domain.

Belongs to the nuclear hormone receptor family.

It is found in the nucleus. Orphan nuclear receptor. This is Nuclear hormone receptor family member nhr-150 (nhr-150) from Caenorhabditis elegans.